The primary structure comprises 235 residues: Adapter protein MecA (235 aa).

Residues 113 to 135 (LRQSDKGDIVKSKVSSSDHKDGS) are compositionally biased toward basic and acidic residues. The tract at residues 113 to 136 (LRQSDKGDIVKSKVSSSDHKDGSQ) is disordered.

It belongs to the MecA family. As to quaternary structure, homodimer.

Enables the recognition and targeting of unfolded and aggregated proteins to the ClpC protease or to other proteins involved in proteolysis. The polypeptide is Adapter protein MecA (Leuconostoc mesenteroides subsp. mesenteroides (strain ATCC 8293 / DSM 20343 / BCRC 11652 / CCM 1803 / JCM 6124 / NCDO 523 / NBRC 100496 / NCIMB 8023 / NCTC 12954 / NRRL B-1118 / 37Y)).